A 764-amino-acid polypeptide reads, in one-letter code: E3 ubiquitin-protein ligase CBL-B-B (764 aa).

A compositionally biased stretch (low complexity) spans 1–19 (MASSSSSSSNSSTSSSALS). A disordered region spans residues 1-27 (MASSSSSSSNSSTSSSALSGRLPGARS). Residues 48–180 (PPKQAAADRR…KAIFPSGQFQ (133 aa)) form a 4H region. Residues 48 to 356 (PPKQAAADRR…GRSYNPDLTD (309 aa)) form the Cbl-PTB domain. The segment at 181 to 253 (GDTFRITKAD…FEFDIFARLF (73 aa)) is EF-hand-like. Asp234, Thr236, Asn238, Tyr240, and Glu245 together coordinate Ca(2+). The tract at residues 254–356 (QPWSSILRNW…GRSYNPDLTD (103 aa)) is SH2-like. Position 299 (Arg299) interacts with 4-O-phospho-L-tyrosine. The segment at 357 to 385 (LCEPTPHDHIKVTQEQYELYCEMGSTFQL) is linker. Residues 386–425 (CKICAENDKDVKIEPCGHLMCTSCLTSWQESDGQGCPFCR) form an RING-type zinc finger. Disordered regions lie at residues 482–583 (MNER…SRTC) and 707–726 (KVRN…SSHP). The span at 485 to 498 (RQNSPVTSPGSSPL) shows a compositional bias: polar residues. Over residues 556-578 (LPAPPPPLREPPPPPERPPPIPP) the composition is skewed to pro residues.

In terms of assembly, interacts with several SH3 domain-containing proteins and with poly-ubiquitinated proteins.

The protein localises to the cytoplasm. The catalysed reaction is S-ubiquitinyl-[E2 ubiquitin-conjugating enzyme]-L-cysteine + [acceptor protein]-L-lysine = [E2 ubiquitin-conjugating enzyme]-L-cysteine + N(6)-ubiquitinyl-[acceptor protein]-L-lysine.. The protein operates within protein modification; protein ubiquitination. Its function is as follows. E3 ubiquitin-protein ligase which accepts ubiquitin from specific E2 ubiquitin-conjugating enzymes, and transfers it to substrates, generally promoting their degradation by the proteasome. The chain is E3 ubiquitin-protein ligase CBL-B-B (cblb-b) from Xenopus laevis (African clawed frog).